A 653-amino-acid chain; its full sequence is Ran-binding protein 9 (653 aa).

The span at 1 to 21 (MSGQPPPPPPQQQPPPPPPPA) shows a compositional bias: pro residues. A disordered region spans residues 1–62 (MSGQPPPPPP…SAAAPFPHGD (62 aa)). Low complexity predominate over residues 22–57 (SAAAPATAPPGLAVGPGPAAGVPVPGLAAGSSAAAP). In terms of domain architecture, B30.2/SPRY spans 72–259 (LQRRLKRLYP…VDANFGQHPF (188 aa)). Residues 290-322 (WQTMIQKMVSSYLVHHGYCATAEAFARSTDQTV) form the LisH domain. Residues 326-332 (LASIKNR) are interaction with CALB1. The CTLH domain maps to 328-385 (SIKNRQRIQKLVLAGRMGEAIETTQQLYPSLLERNPNLLFTLKVRQFIEMVNGTDSEV). Lysine 330 is modified (N6-acetyllysine). Positions 386–422 (RCLGGRSPKSQDSYPVSPRPFSSPSMSPSHGMSIHSL) are disordered. Low complexity predominate over residues 398–421 (SYPVSPRPFSSPSMSPSHGMSIHS). A phosphoserine mark is found at serine 402 and serine 412. The segment at 539–653 (AAIERMIHFG…AFATVEDYLH (115 aa)) is interaction with FMR1.

The protein belongs to the RANBP9/10 family. In terms of assembly, part of a complex consisting of RANBP9, MKLN1 and GID8. Identified in the CTLH complex that contains GID4, RANBP9 and/or RANBP10, MKLN1, MAEA, RMND5A (or alternatively its paralog RMND5B), GID8, ARMC8, WDR26 and YPEL5. Within this complex, MAEA, RMND5A (or alternatively its paralog RMND5B), GID8, WDR26, and RANBP9 and/or RANBP10 form the catalytic core, while GID4, MKLN1, ARMC8 and YPEL5 have ancillary roles. Interacts with GTP-bound Ran, AR, CDC2L1/p110C, CALB1, S100A7, USP11, SOS1 or SOS2, GID8, and FMR1. Interacts with the Dyrk kinases HIPK2, DYRK1A, and DYRK1B. Interacts with TP73 isoform Alpha but not with TP53. Interacts with the HGF receptor MET and the integrins ITGB1 and ITGB2, but not with ITGAL. Part of a complex consisting of RANBP9, RAN, DYRK1B and COPS5. Directly interacts with RANBP10. Interacts with YPEL5. Interacts with MKLN1. Interacts with DDX4. Interacts with NGFR. Interacts with Tex19.1 and, probably, Tex19.2. Phosphorylated in response to stress. Post-translationally, ubiquitinated. Polyubiquitination targets the protein for rapid degradation via the ubiquitin system. In terms of tissue distribution, ubiquitously expressed, with highest levels in maturating spermatocytes.

It localises to the cytoplasm. Its subcellular location is the cell membrane. The protein resides in the nucleus. Functionally, may act as scaffolding protein, and as adapter protein to couple membrane receptors to intracellular signaling pathways. Acts as a mediator of cell spreading and actin cytoskeleton rearrangement. Core component of the CTLH E3 ubiquitin-protein ligase complex that selectively accepts ubiquitin from UBE2H and mediates ubiquitination and subsequent proteasomal degradation of the transcription factor HBP1. May be involved in signaling of ITGB2/LFA-1 and other integrins. Enhances HGF-MET signaling by recruiting Sos and activating the Ras pathway. Enhances dihydrotestosterone-induced transactivation activity of AR, as well as dexamethasone-induced transactivation activity of NR3C1, but not affect estrogen-induced transactivation. Stabilizes TP73 isoform Alpha, probably by inhibiting its ubiquitination, and increases its proapoptotic activity. Inhibits the kinase activity of DYRK1A and DYRK1B. Inhibits FMR1 binding to RNA. The protein is Ran-binding protein 9 of Mus musculus (Mouse).